The following is a 580-amino-acid chain: Zinc finger protein 271 (580 aa).

18 C2H2-type zinc fingers span residues 78–100 (YNCD…QRTH), 104–126 (YECE…QRIH), 132–154 (YPCS…QRVH), 160–182 (YKCD…QRIH), 188–210 (YQCS…LRIH), 216–238 (YMCN…QRIH), 244–266 (YKCD…QRIH), 272–294 (YPCA…RRIH), 300–322 (YKCS…QRIH), 328–350 (YPCN…QRIH), 356–378 (YPCS…YRIH), 384–406 (YECD…QRIH), 412–434 (YPCN…QRVH), 440–462 (YTCN…QRVH), 468–490 (YHCS…HRVH), 496–518 (YACT…QRIH), 524–545 (YKCM…QRIH), and 551–573 (YPCA…QRVH).

This sequence belongs to the krueppel C2H2-type zinc-finger protein family. As to expression, selectively expressed in adult testis.

Its subcellular location is the nucleus. Its function is as follows. May act to control gene activity during the pachytene stage of meiotic prophase. May function as a transcription activator. The sequence is that of Zinc finger protein 271 (Znf271) from Mus musculus (Mouse).